A 347-amino-acid polypeptide reads, in one-letter code: Single-pass membrane and coiled-coil domain-containing protein 2 (347 aa).

Positions 1 to 89 (MMSLQLGTAG…PPSKPDEQEV (89 aa)) are disordered. Composition is skewed to basic and acidic residues over residues 10-21 (GKERQLAEKSRD), 36-51 (EMDH…DKPS), and 60-86 (YKMD…KPDE). The stretch at 139–238 (DWLERINNII…MNVLNSKLEM (100 aa)) forms a coiled coil. Ser-178 carries the post-translational modification Phosphoserine. The segment at 243 to 274 (GSDADSHNSEDVDTEQEEPLVPEASPSLSASP) is disordered. The span at 253–262 (DVDTEQEEPL) shows a compositional bias: acidic residues. Low complexity predominate over residues 263–273 (VPEASPSLSAS). Residues 288-308 (LFVIVYVVTITGLSCYILFVD) traverse the membrane as a helical segment.

The protein resides in the membrane. The sequence is that of Single-pass membrane and coiled-coil domain-containing protein 2 (Smco2) from Mus musculus (Mouse).